The sequence spans 564 residues: Potassium-transporting ATPase potassium-binding subunit (564 aa).

Transmembrane regions (helical) follow at residues 4-24, 67-87, 135-155, 179-199, 258-278, 286-306, 382-402, 420-440, 487-507, and 528-548; these read YDYW…PFLG, TLAL…ILLF, VGLT…LVAL, LYGL…QGVP, FEVA…GHYV, AIIG…LWAE, AGLY…GLMI, LLVV…AIAA, LMLG…VLAL, and GPLF…LTFL.

It belongs to the KdpA family. As to quaternary structure, the system is composed of three essential subunits: KdpA, KdpB and KdpC.

The protein resides in the cell inner membrane. Functionally, part of the high-affinity ATP-driven potassium transport (or Kdp) system, which catalyzes the hydrolysis of ATP coupled with the electrogenic transport of potassium into the cytoplasm. This subunit binds the periplasmic potassium ions and delivers the ions to the membrane domain of KdpB through an intramembrane tunnel. The protein is Potassium-transporting ATPase potassium-binding subunit of Pseudomonas fluorescens (strain Pf0-1).